The following is a 229-amino-acid chain: Guanylate kinase (229 aa).

The 36-residue stretch at 7–42 folds into the RPE1 insert domain; that stretch reads RVLQKCAYREEFKGDMERSTAATSKLPLEVELSRNS. The Guanylate kinase-like domain occupies 44–222; the sequence is GLIIILSSPS…TLKKIHAIIV (179 aa). Residue 51–58 participates in ATP binding; sequence SPSGTGKS.

Belongs to the guanylate kinase family.

The protein localises to the cytoplasm. It carries out the reaction GMP + ATP = GDP + ADP. In terms of biological role, essential for recycling GMP and indirectly, cGMP. The polypeptide is Guanylate kinase (gmk) (Rickettsia conorii (strain ATCC VR-613 / Malish 7)).